Here is a 135-residue protein sequence, read N- to C-terminus: Small ribosomal subunit protein uS12 (135 aa).

D89 is modified (3-methylthioaspartic acid). The segment at 101–135 (SLDTSGVADRKQSRSKYGAKQPKAGAAAPAKGKGR) is disordered. Low complexity predominate over residues 118–135 (GAKQPKAGAAAPAKGKGR).

It belongs to the universal ribosomal protein uS12 family. Part of the 30S ribosomal subunit. Contacts proteins S8 and S17. May interact with IF1 in the 30S initiation complex.

Its function is as follows. With S4 and S5 plays an important role in translational accuracy. Functionally, interacts with and stabilizes bases of the 16S rRNA that are involved in tRNA selection in the A site and with the mRNA backbone. Located at the interface of the 30S and 50S subunits, it traverses the body of the 30S subunit contacting proteins on the other side and probably holding the rRNA structure together. The combined cluster of proteins S8, S12 and S17 appears to hold together the shoulder and platform of the 30S subunit. The protein is Small ribosomal subunit protein uS12 of Chlorobium limicola (strain DSM 245 / NBRC 103803 / 6330).